The chain runs to 311 residues: Inositol oxygenase 1 (311 aa).

Residues 1 to 11 (MTILIDRHSDQ) are compositionally biased toward basic and acidic residues. A disordered region spans residues 1 to 29 (MTILIDRHSDQNDAGDEIVEKNQGNGKEE). Residues Arg-52 and 109 to 111 (DES) contribute to the substrate site. Fe cation is bound by residues His-122, His-147, and Asp-148. Substrate-binding positions include Lys-151 and 168 to 169 (GD). His-220, His-246, and Asp-279 together coordinate Fe cation. 246-247 (HS) serves as a coordination point for substrate.

The protein belongs to the myo-inositol oxygenase family. The cofactor is Fe cation. Expressed in roots, young leaves, stems, flowers and siliques.

It localises to the cytoplasm. It catalyses the reaction myo-inositol + O2 = D-glucuronate + H2O + H(+). It functions in the pathway polyol metabolism; myo-inositol degradation into D-glucuronate; D-glucuronate from myo-inositol: step 1/1. Catalyzes the oxygenative cleavage of myo-inositol to D-glucuronate. Involved in the biosynthesis of UDP-glucuronic acid (UDP-GlcA), providing nucleotide sugars for cell-wall polymers. May be also involved in plant ascorbate biosynthesis. This Arabidopsis thaliana (Mouse-ear cress) protein is Inositol oxygenase 1 (MIOX1).